The following is a 466-amino-acid chain: Dihydrolipoyl dehydrogenase 3 (466 aa).

Residues 33–42, lysine 51, and glycine 115 each bind FAD; that span reads EGRSTLGGTC. Residues cysteine 42 and cysteine 47 are joined by a disulfide bond. NAD(+) contacts are provided by residues 181–185, glutamate 204, valine 238, and 271–274; these read GAGVI and AIGR. Positions 313 and 321 each coordinate FAD. Residue histidine 445 is the Proton acceptor of the active site.

The protein belongs to the class-I pyridine nucleotide-disulfide oxidoreductase family. In terms of assembly, homodimer. The cofactor is FAD.

It localises to the cytoplasm. The catalysed reaction is N(6)-[(R)-dihydrolipoyl]-L-lysyl-[protein] + NAD(+) = N(6)-[(R)-lipoyl]-L-lysyl-[protein] + NADH + H(+). Functionally, LPD-3 may substitute for lipoamide dehydrogenase of the 2-oxoglutarate dehydrogenase and pyruvate multienzyme complexes when the latter is inactive or missing. This is Dihydrolipoyl dehydrogenase 3 (lpd3) from Pseudomonas putida (Arthrobacter siderocapsulatus).